A 349-amino-acid chain; its full sequence is Fe(3+) ions import ATP-binding protein FbpC (349 aa).

An ABC transporter domain is found at 4–236 (LELHHIGKSY…PVDEPTATFL (233 aa)). ATP is bound at residue 36–43 (GPSGSGKT).

Belongs to the ABC transporter superfamily. Fe(3+) ion importer (TC 3.A.1.10) family. The complex is composed of two ATP-binding proteins (FbpC), two transmembrane proteins (FbpB) and a solute-binding protein (FbpA).

The protein localises to the cell inner membrane. The enzyme catalyses Fe(3+)(out) + ATP + H2O = Fe(3+)(in) + ADP + phosphate + H(+). Functionally, part of the ABC transporter complex FbpABC involved in Fe(3+) ions import. Responsible for energy coupling to the transport system. This Yersinia pseudotuberculosis serotype I (strain IP32953) protein is Fe(3+) ions import ATP-binding protein FbpC.